We begin with the raw amino-acid sequence, 338 residues long: Ketol-acid reductoisomerase (NADP(+)) (338 aa).

One can recognise a KARI N-terminal Rossmann domain in the interval 1-181; the sequence is MKVSYDKDCD…GGGRTGIIET (181 aa). NADP(+) is bound by residues 24 to 27, Arg47, Ser50, Ser52, and 82 to 85; these read YGSQ and DEFQ. Residue His107 is part of the active site. Gly133 contacts NADP(+). The KARI C-terminal knotted domain occupies 182-327; the sequence is TFKDETETDL…EKLRAMMPWI (146 aa). Mg(2+)-binding residues include Asp190, Glu194, Glu226, and Glu230. Ser251 is a binding site for substrate.

The protein belongs to the ketol-acid reductoisomerase family. Mg(2+) serves as cofactor.

It carries out the reaction (2R)-2,3-dihydroxy-3-methylbutanoate + NADP(+) = (2S)-2-acetolactate + NADPH + H(+). It catalyses the reaction (2R,3R)-2,3-dihydroxy-3-methylpentanoate + NADP(+) = (S)-2-ethyl-2-hydroxy-3-oxobutanoate + NADPH + H(+). It participates in amino-acid biosynthesis; L-isoleucine biosynthesis; L-isoleucine from 2-oxobutanoate: step 2/4. The protein operates within amino-acid biosynthesis; L-valine biosynthesis; L-valine from pyruvate: step 2/4. In terms of biological role, involved in the biosynthesis of branched-chain amino acids (BCAA). Catalyzes an alkyl-migration followed by a ketol-acid reduction of (S)-2-acetolactate (S2AL) to yield (R)-2,3-dihydroxy-isovalerate. In the isomerase reaction, S2AL is rearranged via a Mg-dependent methyl migration to produce 3-hydroxy-3-methyl-2-ketobutyrate (HMKB). In the reductase reaction, this 2-ketoacid undergoes a metal-dependent reduction by NADPH to yield (R)-2,3-dihydroxy-isovalerate. This is Ketol-acid reductoisomerase (NADP(+)) from Stutzerimonas stutzeri (strain A1501) (Pseudomonas stutzeri).